Consider the following 195-residue polypeptide: Keratin-associated protein 4-11 (195 aa).

A run of 27 repeats spans residues 5 to 9, 24 to 28, 29 to 33, 34 to 38, 44 to 48, 49 to 53, 54 to 58, 59 to 63, 64 to 68, 69 to 73, 74 to 78, 79 to 83, 84 to 88, 89 to 93, 94 to 98, 99 to 103, 104 to 108, 109 to 113, 114 to 118, 119 to 123, 124 to 128, 129 to 133, 134 to 138, 144 to 148, 149 to 153, 154 to 158, and 159 to 163. A 27 X 5 AA repeats of C-C-[GIKRQVHEL]-[SPTR]-[STVQRMC] region spans residues 5–163; the sequence is CCGSVCSHQG…CCRPCCCLRP (159 aa).

It belongs to the KRTAP type 4 family. Interacts with hair keratins. In terms of tissue distribution, expressed in the hair follicles.

Its function is as follows. In the hair cortex, hair keratin intermediate filaments are embedded in an interfilamentous matrix, consisting of hair keratin-associated proteins (KRTAP), which are essential for the formation of a rigid and resistant hair shaft through their extensive disulfide bond cross-linking with abundant cysteine residues of hair keratins. The matrix proteins include the high-sulfur and high-glycine-tyrosine keratins. The polypeptide is Keratin-associated protein 4-11 (KRTAP4-11) (Homo sapiens (Human)).